The primary structure comprises 994 residues: Leucine-rich repeat receptor-like kinase protein FLORAL ORGAN NUMBER1 (994 aa).

A signal peptide spans 1 to 17; it reads MPPTLLLLLLLLPPSLA. LRR repeat units follow at residues 73 to 93, 94 to 117, 118 to 141, 147 to 171, 172 to 194, 195 to 219, 244 to 268, 269 to 292, 293 to 316, 318 to 340, 341 to 364, 365 to 388, 390 to 412, 413 to 436, 438 to 459, 460 to 483, 484 to 507, 509 to 531, 533 to 555, 556 to 579, and 581 to 604; these read AINL…IALL, DSLA…LPTL, PSLR…DSGG, FPSL…SASH, ARLR…SYGD, LAAL…LSRL, LGAL…LGRL, QRLD…LGDL, SSLA…LANL, NLKL…VAGF, AQLE…LGKN, GRLK…LCAG, RLEM…LGDC, KTLT…LFNL, QANM…VIGG, DKIG…IGNL, PALQ…IGNL, NLSR…LIRC, SLAA…ITSL, KILC…MSNM, and SLTT…QFLV. Asn-75, Asn-98, Asn-124, Asn-129, and Asn-159 each carry an N-linked (GlcNAc...) asparagine glycan. Residue Asn-256 is glycosylated (N-linked (GlcNAc...) asparagine). Asn-315 is a glycosylation site (N-linked (GlcNAc...) asparagine). N-linked (GlcNAc...) asparagine glycosylation is present at Asn-352. 3 N-linked (GlcNAc...) asparagine glycosylation sites follow: Asn-495, Asn-509, and Asn-514. 2 N-linked (GlcNAc...) asparagine glycosylation sites follow: Asn-562 and Asn-578. Residue Asn-606 is glycosylated (N-linked (GlcNAc...) asparagine). Residues 647 to 667 form a helical membrane-spanning segment; it reads KKMLVALVAAFAAVAVAFLGA. The 275-residue stretch at 704-978 folds into the Protein kinase domain; sequence VKEDNIIGKG…TMREVVHMLS (275 aa). Residues 710-718 and Lys-731 contribute to the ATP site; that span reads IGKGGAGIV. Asp-828 (proton acceptor) is an active-site residue.

This sequence belongs to the protein kinase superfamily. Ser/Thr protein kinase family. Expressed in shoot apical meristem, and after transition to the reproductive phase, detected in the inflorescence and the floral meristems. Expressed uniformly throughout the meristems. Expressed also in floral organ primordia, such as the palea, lemma, lodicules, stamens, carpels and ovules.

Its subcellular location is the membrane. The enzyme catalyses L-seryl-[protein] + ATP = O-phospho-L-seryl-[protein] + ADP + H(+). It catalyses the reaction L-threonyl-[protein] + ATP = O-phospho-L-threonyl-[protein] + ADP + H(+). In terms of biological role, receptor-like kinase protein that regulates the size of the floral meristem. The protein is Leucine-rich repeat receptor-like kinase protein FLORAL ORGAN NUMBER1 (FON1) of Oryza sativa subsp. japonica (Rice).